Here is a 136-residue protein sequence, read N- to C-terminus: Monothiol glutaredoxin-S3 (136 aa).

The 118-residue stretch at 18–135 (EREVRRAVEE…PVLKQAGALW (118 aa)) folds into the Glutaredoxin domain. Cys-38 contributes to the [2Fe-2S] cluster binding site. Residues 133 to 136 (ALWL) carry the Responsive for interaction with TGA factors motif.

The protein belongs to the glutaredoxin family. CC-type subfamily.

It localises to the cytoplasm. The protein resides in the nucleus. In terms of biological role, may only reduce GSH-thiol disulfides, but not protein disulfides. This Oryza sativa subsp. japonica (Rice) protein is Monothiol glutaredoxin-S3 (GRXS3).